The primary structure comprises 399 residues: Insertion element IS900 uncharacterized 42 kDa protein (399 aa).

The protein belongs to the transposase IS1111A/IS1328/IS1533 family.

The chain is Insertion element IS900 uncharacterized 42 kDa protein from Mycobacterium paratuberculosis.